We begin with the raw amino-acid sequence, 154 residues long: Telokin (154 aa).

The segment at 1 to 24 (ISGMSGRKASGSSPTSPINANKVE) is disordered. Positions 10-19 (SGSSPTSPIN) are enriched in polar residues. The region spanning 42–133 (PYFTKTILDM…ATCTAELLVE (92 aa)) is the Ig-like C2-type domain. A disordered region spans residues 134-154 (TMGKEGEGEGEGEEDEEEEEE). Acidic residues predominate over residues 141-154 (GEGEGEEDEEEEEE).

It belongs to the protein kinase superfamily. CAMK Ser/Thr protein kinase family. In terms of assembly, binds calmodulin.

Functionally, corresponds to the C-terminus of smooth muscle myosin light chain kinase. This chain is Telokin, found in Meleagris gallopavo (Wild turkey).